The following is a 638-amino-acid chain: tRNA uridine 5-carboxymethylaminomethyl modification enzyme MnmG (638 aa).

FAD-binding positions include 15-20 (GAGHAG), Ile127, and Ser182. 276 to 290 (GPRYCPSIEDKIVRF) is a binding site for NAD(+). FAD is bound at residue Gln373.

It belongs to the MnmG family. As to quaternary structure, homodimer. Heterotetramer of two MnmE and two MnmG subunits. It depends on FAD as a cofactor.

The protein resides in the cytoplasm. Functionally, NAD-binding protein involved in the addition of a carboxymethylaminomethyl (cmnm) group at the wobble position (U34) of certain tRNAs, forming tRNA-cmnm(5)s(2)U34. In Streptococcus suis (strain 98HAH33), this protein is tRNA uridine 5-carboxymethylaminomethyl modification enzyme MnmG.